Consider the following 620-residue polypeptide: Methionine--tRNA ligase (620 aa).

The 'HIGH' region motif lies at 11–21; it reads PYANGPRHIGH. Residues C143, C146, C156, and C159 each coordinate Zn(2+). The 'KMSKS' region motif lies at 347-351; sequence KFSSS. Residue S350 coordinates ATP.

Belongs to the class-I aminoacyl-tRNA synthetase family. MetG type 1 subfamily. Monomer. Zn(2+) serves as cofactor.

It localises to the cytoplasm. It carries out the reaction tRNA(Met) + L-methionine + ATP = L-methionyl-tRNA(Met) + AMP + diphosphate. Is required not only for elongation of protein synthesis but also for the initiation of all mRNA translation through initiator tRNA(fMet) aminoacylation. The polypeptide is Methionine--tRNA ligase (Bifidobacterium adolescentis (strain ATCC 15703 / DSM 20083 / NCTC 11814 / E194a)).